We begin with the raw amino-acid sequence, 711 residues long: Nuclear intron maturase 1, mitochondrial (711 aa).

Residues 147 to 459 (KDKISMNGGE…RGIQFLDHII (313 aa)) form the Reverse transcriptase domain. The interval 484-653 (GTLLSVSASL…QVLQEYIRLQ (170 aa)) is intron maturase type-2.

Belongs to the plant nuclear intron maturase (nMat) family. Expressed at low levels in seedlings and accumulates in adult plants.

The protein localises to the mitochondrion. In terms of biological role, nuclear-encoded maturase required for splicing of group-II introns in mitochondria. Necessary for mitochondrial biogenesis during early developmental stages. Involved in the splicing of mitochondrial NAD4 transcripts. Required for trans-splicing of NAD1 intron 1 and also functions in cis-splicing of NAD2 intron 1 and NAD4 intron 2. Required for the regulation of fundamental metabolic pathways such as amino acid metabolism, triacylglycerol degradation and polysaccharide synthesis (cellulose and starch) during the early stage of plant growth. Implicated in stress responses. The sequence is that of Nuclear intron maturase 1, mitochondrial from Arabidopsis thaliana (Mouse-ear cress).